Consider the following 754-residue polypeptide: Phosphoribosylformylglycinamidine synthase subunit PurL (754 aa).

Residue histidine 54 is part of the active site. Residues tyrosine 57 and lysine 101 each contribute to the ATP site. Glutamate 103 contacts Mg(2+). Substrate is bound by residues 104 to 107 (SHNH) and arginine 126. Residue histidine 105 is the Proton acceptor of the active site. Aspartate 127 serves as a coordination point for Mg(2+). Glutamine 252 provides a ligand contact to substrate. Aspartate 280 provides a ligand contact to Mg(2+). A substrate-binding site is contributed by 324–326 (ESQ). The segment at 386–412 (PVYQRPVSRPESQEALNADSSKGLPRP) is disordered. Residues asparagine 512 and glycine 549 each coordinate ATP. Residue asparagine 550 coordinates Mg(2+). Serine 552 provides a ligand contact to substrate.

It belongs to the FGAMS family. As to quaternary structure, monomer. Part of the FGAM synthase complex composed of 1 PurL, 1 PurQ and 2 PurS subunits.

It is found in the cytoplasm. It carries out the reaction N(2)-formyl-N(1)-(5-phospho-beta-D-ribosyl)glycinamide + L-glutamine + ATP + H2O = 2-formamido-N(1)-(5-O-phospho-beta-D-ribosyl)acetamidine + L-glutamate + ADP + phosphate + H(+). Its pathway is purine metabolism; IMP biosynthesis via de novo pathway; 5-amino-1-(5-phospho-D-ribosyl)imidazole from N(2)-formyl-N(1)-(5-phospho-D-ribosyl)glycinamide: step 1/2. Part of the phosphoribosylformylglycinamidine synthase complex involved in the purines biosynthetic pathway. Catalyzes the ATP-dependent conversion of formylglycinamide ribonucleotide (FGAR) and glutamine to yield formylglycinamidine ribonucleotide (FGAM) and glutamate. The FGAM synthase complex is composed of three subunits. PurQ produces an ammonia molecule by converting glutamine to glutamate. PurL transfers the ammonia molecule to FGAR to form FGAM in an ATP-dependent manner. PurS interacts with PurQ and PurL and is thought to assist in the transfer of the ammonia molecule from PurQ to PurL. This Mycobacterium leprae (strain Br4923) protein is Phosphoribosylformylglycinamidine synthase subunit PurL.